Consider the following 567-residue polypeptide: Hexose transporter HXT15 (567 aa).

Residues 1-19 are compositionally biased toward polar residues; the sequence is MASEQSSPEINADNLNSSA. Residues 1-32 form a disordered region; sequence MASEQSSPEINADNLNSSAADVHVQPPGEKEW. Topologically, residues 1–55 are cytoplasmic; sequence MASEQSSPEINADNLNSSAADVHVQPPGEKEWSDGFYDKEVINGNTPDAPKRGFL. A helical membrane pass occupies residues 56-76; the sequence is GYLIIYLLCYPVSFGGFLPGW. At 77 to 112 the chain is on the extracellular side; the sequence is DSGITAGFINMDNFKMNFGSYKHSTGEYYLSNVRMG. The helical transmembrane segment at 113–133 threads the bilayer; it reads LLVAMFSVGCSIGGVAFARLA. The Cytoplasmic portion of the chain corresponds to 134–139; sequence DTLGRR. The helical transmembrane segment at 140–160 threads the bilayer; the sequence is LAIVIVVLVYMVGAIIQISSN. Residues 161–170 are Extracellular-facing; the sequence is HKWYQYFVGK. The chain crosses the membrane as a helical span at residues 171-191; it reads IIYGLGAGGCSVLCPMLLSEI. At 192–197 the chain is on the cytoplasmic side; sequence APTDLR. The chain crosses the membrane as a helical span at residues 198–218; the sequence is GGLVSLYQLNMTFGIFLGYCS. The Extracellular segment spans residues 219–232; it reads VYGTRKYSNTAQWR. Residues 233-253 traverse the membrane as a helical segment; sequence IPVGLCFLWALIIIVGMLLVP. At 254 to 336 the chain is on the cytoplasmic side; the sequence is ESPRYLIECE…VQTFLQLTGE (83 aa). A helical membrane pass occupies residues 337–353; sequence NYFFFYGTTIFKSVGLT. At 354-359 the chain is on the extracellular side; the sequence is DGFETS. The helical transmembrane segment at 360 to 377 threads the bilayer; that stretch reads IVLGTVNFFSTIIAVMVV. Topologically, residues 378–384 are cytoplasmic; that stretch reads DKIGRRK. The helical transmembrane segment at 385 to 405 threads the bilayer; that stretch reads CLLFGAASMMACMVIFASIGV. Residues 406-427 lie on the Extracellular side of the membrane; sequence KCLYPHGQDGPSSKGAGNAMIV. Residues 428–448 form a helical membrane-spanning segment; the sequence is FTCFYIFCFATTWAPVAYIVV. The Cytoplasmic portion of the chain corresponds to 449–465; that stretch reads AESFPSKVKSKAMSIST. The helical transmembrane segment at 466-486 threads the bilayer; the sequence is AFNWLWQFLIGFFTPFITGSI. Histidine 487 is a topological domain (extracellular). A helical membrane pass occupies residues 488 to 508; it reads FYYGYVFVGCLVAMFLYVFFF. Residues 509–567 lie on the Cytoplasmic side of the membrane; sequence LPETIGLSLEEIQLLYEEGIKPWKSASWVPPSRRGASSRETEAKKKSWKEVLKFPKSFN. Residues 533–555 are disordered; that stretch reads SASWVPPSRRGASSRETEAKKKS. The span at 545 to 555 shows a compositional bias: basic and acidic residues; sequence SSRETEAKKKS.

It belongs to the major facilitator superfamily. Sugar transporter (TC 2.A.1.1) family.

It localises to the membrane. Probable glucose transporter. The protein is Hexose transporter HXT15 (HXT15) of Saccharomyces cerevisiae (strain ATCC 204508 / S288c) (Baker's yeast).